Here is a 401-residue protein sequence, read N- to C-terminus: Dual-specificity RNA methyltransferase RlmN (401 aa).

Glu-114 (proton acceptor) is an active-site residue. The 246-residue stretch at Asp-120–Asp-365 folds into the Radical SAM core domain. Cys-127 and Cys-370 are joined by a disulfide. [4Fe-4S] cluster-binding residues include Cys-134, Cys-138, and Cys-141. Residues Gly-187–Glu-188, Ser-219, Ser-241–His-243, and Asn-327 contribute to the S-adenosyl-L-methionine site. Cys-370 functions as the S-methylcysteine intermediate in the catalytic mechanism.

This sequence belongs to the radical SAM superfamily. RlmN family. [4Fe-4S] cluster serves as cofactor.

The protein localises to the cytoplasm. It catalyses the reaction adenosine(2503) in 23S rRNA + 2 reduced [2Fe-2S]-[ferredoxin] + 2 S-adenosyl-L-methionine = 2-methyladenosine(2503) in 23S rRNA + 5'-deoxyadenosine + L-methionine + 2 oxidized [2Fe-2S]-[ferredoxin] + S-adenosyl-L-homocysteine. It carries out the reaction adenosine(37) in tRNA + 2 reduced [2Fe-2S]-[ferredoxin] + 2 S-adenosyl-L-methionine = 2-methyladenosine(37) in tRNA + 5'-deoxyadenosine + L-methionine + 2 oxidized [2Fe-2S]-[ferredoxin] + S-adenosyl-L-homocysteine. Functionally, specifically methylates position 2 of adenine 2503 in 23S rRNA and position 2 of adenine 37 in tRNAs. m2A2503 modification seems to play a crucial role in the proofreading step occurring at the peptidyl transferase center and thus would serve to optimize ribosomal fidelity. The chain is Dual-specificity RNA methyltransferase RlmN from Xanthomonas campestris pv. campestris (strain 8004).